A 1412-amino-acid polypeptide reads, in one-letter code: DNA-directed RNA polymerase subunit beta' (1412 aa).

C70, C72, C85, and C88 together coordinate Zn(2+). Positions 458, 460, and 462 each coordinate Mg(2+). Residues C813, C887, C894, and C897 each contribute to the Zn(2+) site. Residues 1388-1412 are disordered; that stretch reads EQALLTPATTAEAVVGEEPAPPPAQ. Low complexity predominate over residues 1393-1405; that stretch reads TPATTAEAVVGEE.

Belongs to the RNA polymerase beta' chain family. In terms of assembly, the RNAP catalytic core consists of 2 alpha, 1 beta, 1 beta' and 1 omega subunit. When a sigma factor is associated with the core the holoenzyme is formed, which can initiate transcription. Mg(2+) is required as a cofactor. It depends on Zn(2+) as a cofactor.

It carries out the reaction RNA(n) + a ribonucleoside 5'-triphosphate = RNA(n+1) + diphosphate. DNA-dependent RNA polymerase catalyzes the transcription of DNA into RNA using the four ribonucleoside triphosphates as substrates. The sequence is that of DNA-directed RNA polymerase subunit beta' from Methylibium petroleiphilum (strain ATCC BAA-1232 / LMG 22953 / PM1).